Consider the following 588-residue polypeptide: MKFSLVTDAFEKMSKTTKRTELTEILVELLKSADEDLQSLVYLIEGKLAPDYQGIETQMSDKLIIKALSIVSNIPEEAVSETYSKLGDIGSVAREIAAKKNMRSLVNEDLTVKYVHDTLMRMAKTSGSGSTKARIDAYVDLALSGTPADLMYITRIITGKLRIGVSDATILDAIILAFSDEKYSEEIENAYNFHPDLGYIAVQLRLGNLESVINMGPTPMVPFKVMLAERLRSVDEIVQKMNGKCAFEYKYDGMRTEIHIVDEKVRLFSRGNEETTGQFPDIVKSAKETFHVSSVILDGEAVPYNPETGELYPFQVISQRRGRKYDLDKVSNEIPITVFLFDIVYINGKDLSKTPYAERRRILEGLFKENDNFKLAKRIVSSDTGTITKFFNQAIEDGCEGLVAKSMADDSYYKAGARGWLWIKLKRDYQAQLWDTIDLTVVGAFMGHGRRSGTYGALLLATYNEKNDTFETVCKLGSGFTDDVLFSLPKRFAEFVSKEKPARVVSTIEPDVWIYPSIVMEIIGAEITISPVHTCAFGIIEKDAGLSIRFPRFTGKWRDDKKPEDSTTTQEIIEMYKEQKKTLTEEKS.

Glu248 is an ATP binding site. Lys250 functions as the N6-AMP-lysine intermediate in the catalytic mechanism. Positions 255, 270, 300, 341, 418, and 424 each coordinate ATP.

It belongs to the ATP-dependent DNA ligase family. The cofactor is Mg(2+).

The enzyme catalyses ATP + (deoxyribonucleotide)n-3'-hydroxyl + 5'-phospho-(deoxyribonucleotide)m = (deoxyribonucleotide)n+m + AMP + diphosphate.. DNA ligase that seals nicks in double-stranded DNA during DNA replication, DNA recombination and DNA repair. The chain is DNA ligase from Thermoplasma volcanium (strain ATCC 51530 / DSM 4299 / JCM 9571 / NBRC 15438 / GSS1).